A 71-amino-acid chain; its full sequence is DNA-directed RNA polymerase subunit epsilon (71 aa).

Belongs to the RNA polymerase subunit epsilon family. In terms of assembly, monomer. RNAP is composed of a core of 2 alpha, a beta and a beta' subunit. The core is associated with a delta subunit, and at least one of epsilon or omega. When a sigma factor is associated with the core the holoenzyme is formed, which can initiate transcription.

It carries out the reaction RNA(n) + a ribonucleoside 5'-triphosphate = RNA(n+1) + diphosphate. In terms of biological role, a non-essential component of RNA polymerase (RNAP). Has a similar structure to bacteriophage T7 protein Gp2 (AC P03704), which is known to bind to RNAP in the DNA binding-cleft. Unlike Gp2 however, this protein does not inhibit transcription initiation. This is DNA-directed RNA polymerase subunit epsilon from Geobacillus stearothermophilus (strain DSM 13240 / CIP 106956 / 10).